The chain runs to 344 residues: Short chain dehydrogenase/reductase mfmJ (344 aa).

Residues Leu-51, Lys-76, Asp-99, Asn-126, Tyr-213, and Lys-217 each contribute to the NADP(+) site. The active-site Proton donor is Tyr-213. Residue Lys-217 is the Lowers pKa of active site Tyr of the active site.

It belongs to the short-chain dehydrogenases/reductases (SDR) family.

Functionally, short chain dehydrogenase/reductase; part of the gene cluster that mediates the biosynthesis of the phthalide-terpenoid hybrid 11'-O-desmethylfendlerol. MfmJ seems not to be involved directly in the biosynthesis of 11'-O-desmethylfendlerol and its role has still to be determined. The biosynthesis of 11'-O-desmethylfendlerol begins with the NR-PKS mfmB that forms 3,5-dimethylorsellinic acid (DMOA), which is then transformed into the phthalide 5,7-dihydroxy-4-(hydroxymethyl)-6-methylphthalide by the cytochrome P450 monooxygenase mfmA and the hydrolase mfmC. Subsequently, the methyltransferase mfmE catalyzes 7-O-methylation to yield 5-hydroxy-4-(hydroxymethyl)-7-methoxy-6-methylphthalide, which undergoes C-3 hydroxylation by the cytochrome P450 monooxygenase mfmF. The resultant cyclopolic acid (2,5-dihydroxy-4-(hydroxymethyl)-7-methoxy-6-methylphthalide) is then farnesylated by the DMATS-type prenyltransferase mfmD to afford 5-O-farnesylcyclopolic acid. Finally, the Pyr4-family terpene cyclase mfmH cyclizes the farnesyl moiety of 5-O-farnesylcyclopolic acid into a drimane-like structure, thus completing the biosynthesis of 11'-O-desmethylfendlerol. The protein is Short chain dehydrogenase/reductase mfmJ of Annulohypoxylon moriforme (Filamentous fungus).